The chain runs to 110 residues: Iron-sulfur cluster assembly protein CyaY (110 aa).

It belongs to the frataxin family.

Its function is as follows. Involved in iron-sulfur (Fe-S) cluster assembly. May act as a regulator of Fe-S biogenesis. The chain is Iron-sulfur cluster assembly protein CyaY from Stutzerimonas stutzeri (strain A1501) (Pseudomonas stutzeri).